The primary structure comprises 504 residues: ATP synthase subunit alpha (504 aa).

Residue 169-176 (GDRQTGKT) participates in ATP binding.

Belongs to the ATPase alpha/beta chains family. As to quaternary structure, F-type ATPases have 2 components, CF(1) - the catalytic core - and CF(0) - the membrane proton channel. CF(1) has five subunits: alpha(3), beta(3), gamma(1), delta(1), epsilon(1). CF(0) has three main subunits: a(1), b(2) and c(9-12). The alpha and beta chains form an alternating ring which encloses part of the gamma chain. CF(1) is attached to CF(0) by a central stalk formed by the gamma and epsilon chains, while a peripheral stalk is formed by the delta and b chains.

The protein localises to the cell membrane. It catalyses the reaction ATP + H2O + 4 H(+)(in) = ADP + phosphate + 5 H(+)(out). Produces ATP from ADP in the presence of a proton gradient across the membrane. The alpha chain is a regulatory subunit. The chain is ATP synthase subunit alpha from Clostridium kluyveri (strain NBRC 12016).